A 132-amino-acid chain; its full sequence is Ribosome-binding factor A (132 aa).

Belongs to the RbfA family. In terms of assembly, monomer. Binds 30S ribosomal subunits, but not 50S ribosomal subunits or 70S ribosomes.

It is found in the cytoplasm. One of several proteins that assist in the late maturation steps of the functional core of the 30S ribosomal subunit. Associates with free 30S ribosomal subunits (but not with 30S subunits that are part of 70S ribosomes or polysomes). Required for efficient processing of 16S rRNA. May interact with the 5'-terminal helix region of 16S rRNA. In Bordetella avium (strain 197N), this protein is Ribosome-binding factor A.